A 332-amino-acid polypeptide reads, in one-letter code: Adenosine deaminase (332 aa).

Zn(2+) is bound by residues His-12 and His-14. His-14, Asp-16, and Gly-170 together coordinate substrate. His-197 is a Zn(2+) binding site. Glu-200 (proton donor) is an active-site residue. Residue Asp-278 participates in Zn(2+) binding. Residue Asp-279 coordinates substrate.

It belongs to the metallo-dependent hydrolases superfamily. Adenosine and AMP deaminases family. Adenosine deaminase subfamily. The cofactor is Zn(2+).

It catalyses the reaction adenosine + H2O + H(+) = inosine + NH4(+). The enzyme catalyses 2'-deoxyadenosine + H2O + H(+) = 2'-deoxyinosine + NH4(+). Functionally, catalyzes the hydrolytic deamination of adenosine and 2-deoxyadenosine. The chain is Adenosine deaminase from Yersinia enterocolitica serotype O:8 / biotype 1B (strain NCTC 13174 / 8081).